A 328-amino-acid chain; its full sequence is DNA-directed RNA polymerase subunit alpha (328 aa).

Positions 1 to 234 are alpha N-terminal domain (alpha-NTD); the sequence is MQGSVTEFLK…EQLDAFVDLR (234 aa). The alpha C-terminal domain (alpha-CTD) stretch occupies residues 248 to 328; sequence FXPILLRPVD…NWPPASIAED (81 aa).

It belongs to the RNA polymerase alpha chain family. As to quaternary structure, homodimer. The RNAP catalytic core consists of 2 alpha, 1 beta, 1 beta' and 1 omega subunit. When a sigma factor is associated with the core the holoenzyme is formed, which can initiate transcription.

The enzyme catalyses RNA(n) + a ribonucleoside 5'-triphosphate = RNA(n+1) + diphosphate. Its function is as follows. DNA-dependent RNA polymerase catalyzes the transcription of DNA into RNA using the four ribonucleoside triphosphates as substrates. The protein is DNA-directed RNA polymerase subunit alpha of Haemophilus influenzae (strain ATCC 51907 / DSM 11121 / KW20 / Rd).